Reading from the N-terminus, the 121-residue chain is Small ribosomal subunit protein uS13 (121 aa).

The disordered stretch occupies residues 90–121 (RHRRGLPVRGQHTKNNARTRKGKKVSIAGRKK).

Belongs to the universal ribosomal protein uS13 family. As to quaternary structure, part of the 30S ribosomal subunit. Forms a loose heterodimer with protein S19. Forms two bridges to the 50S subunit in the 70S ribosome.

In terms of biological role, located at the top of the head of the 30S subunit, it contacts several helices of the 16S rRNA. In the 70S ribosome it contacts the 23S rRNA (bridge B1a) and protein L5 of the 50S subunit (bridge B1b), connecting the 2 subunits; these bridges are implicated in subunit movement. Contacts the tRNAs in the A and P-sites. This Lactiplantibacillus plantarum (strain ATCC BAA-793 / NCIMB 8826 / WCFS1) (Lactobacillus plantarum) protein is Small ribosomal subunit protein uS13.